A 136-amino-acid polypeptide reads, in one-letter code: Large ribosomal subunit protein bL17 (136 aa).

Belongs to the bacterial ribosomal protein bL17 family. As to quaternary structure, part of the 50S ribosomal subunit. Contacts protein L32.

The protein is Large ribosomal subunit protein bL17 of Rickettsia peacockii (strain Rustic).